Consider the following 62-residue polypeptide: Large ribosomal subunit protein uL29 (62 aa).

It belongs to the universal ribosomal protein uL29 family.

This Acholeplasma laidlawii (strain PG-8A) protein is Large ribosomal subunit protein uL29.